A 3011-amino-acid polypeptide reads, in one-letter code: Chromodomain-helicase-DNA-binding protein 7 (3011 aa).

Disordered regions lie at residues 90–146, 159–189, 202–422, 502–806, and 941–960; these read ISNA…SMWG, PYQQQQQQPQPTQPPQAPSGPPGQGHPQHMQ, MQQH…GSAG, QQLP…VEKI, and PEMERVERPPADDWKKSESS. Residues 159–168 are compositionally biased toward low complexity; it reads PYQQQQQQPQ. Pro residues predominate over residues 169–179; it reads PTQPPQAPSGP. Residues 203–215 show a composition bias toward low complexity; sequence QQHGQPQQQRMNQ. Polar residues-rich tracts occupy residues 216–227, 241–258, 291–347, and 374–393; these read FSQGQEGLNQGN, VPQQNPSMAPSLRHSVQQ, QTLN…NQSV, and GSLNQMNTQTMHPSQPQGTY. Residues 502 to 516 are compositionally biased toward low complexity; that stretch reads QQLPSQQQSFQQQMP. Polar residues-rich tracts occupy residues 576 to 586 and 630 to 641; these read TQVSGPNTQLV and DSQNLSRNSVDC. Composition is skewed to basic and acidic residues over residues 655–684 and 718–730; these read KKEPKDPKEPKEKKEPKTPKVPKTPKEPKE and KGKEGSENSDLDK. Basic residues predominate over residues 747–759; it reads QKRRSSRQVKRKR. Residues 760 to 770 show a composition bias toward basic and acidic residues; the sequence is YTEDLEFKISD. Over residues 783–795 the composition is skewed to polar residues; that stretch reads SPSNTSQSEQQES. Chromo domains lie at 801 to 868 and 883 to 948; these read PVVE…GQNK and VEID…RVER. In terms of domain architecture, Helicase ATP-binding spans 981–1155; that stretch reads LFNWYNTRNC…FSLLHFLEPG (175 aa). 994–1001 is a binding site for ATP; that stretch reads DEMGLGKT. The DEAH box motif lies at 1106–1109; sequence DEAH. Residues 1295–1465 form the Helicase C-terminal domain; that stretch reads LIDKLLPKLK…LSKKEIEDLL (171 aa). 3 disordered regions span residues 1577 to 1602, 1836 to 1869, and 2136 to 2291; these read FSDLESDSEEKPSTKPRRPQDKSQGY, GTDMLADGGDGGEFDREDEDPEYKPTRTPFKDEI, and GTGN…GFYM. Residues 1585-1597 show a composition bias toward basic and acidic residues; the sequence is EEKPSTKPRRPQD. The span at 1845 to 1856 shows a compositional bias: acidic residues; sequence DGGEFDREDEDP. A compositionally biased stretch (basic and acidic residues) spans 1857 to 1867; the sequence is EYKPTRTPFKD. Polar residues predominate over residues 2136–2145; it reads GTGNANTVSS. 2 stretches are compositionally biased toward basic and acidic residues: residues 2166-2207 and 2218-2238; these read QEEK…KQDC and CELKDIEMSTDVDPKSISEKG. The segment covering 2239–2253 has biased composition (acidic residues); it reads SEEDEEEKLDDDDKS. Residues 2403-2433 are a coiled coil; sequence RRRRRKIEIEAERAAKRRNLMEMVAQLRESQ. S2561 carries the phosphoserine modification. 2 disordered regions span residues 2825–2900 and 2946–3011; these read TTGN…LPTN and GSNE…ENDE. The segment covering 2841–2851 has biased composition (basic and acidic residues); it reads GASKAEEKKNE. Polar residues predominate over residues 2864–2877; it reads DTVSATDSANGSVS. Low complexity predominate over residues 2878–2893; it reads AATAATTATATTTTTT. The segment covering 2948–2964 has biased composition (basic and acidic residues); the sequence is NEEKATDKTEGTAFKDE. Composition is skewed to acidic residues over residues 2965 to 2974 and 2984 to 3011; these read ENLEGSDAEE and ILEDEIAQGEELDSLDGGEEIENNENDE.

The protein belongs to the SNF2/RAD54 helicase family. In terms of tissue distribution, expressed in the neural epithelium, otic placodes, optic placodes, branchial arches, and the olfactory placodes,.

The protein resides in the nucleus. The enzyme catalyses ATP + H2O = ADP + phosphate + H(+). In terms of biological role, ATP-dependent chromatin-remodeling factor, slides nucleosomes along DNA; nucleosome sliding requires ATP.Probable transcription regulator. Maybe involved in the in 45S precursor rRNA production. In Gallus gallus (Chicken), this protein is Chromodomain-helicase-DNA-binding protein 7 (CHD7).